We begin with the raw amino-acid sequence, 149 residues long: Large ribosomal subunit protein bL9 (149 aa).

Belongs to the bacterial ribosomal protein bL9 family.

Its function is as follows. Binds to the 23S rRNA. This Leptospira interrogans serogroup Icterohaemorrhagiae serovar copenhageni (strain Fiocruz L1-130) protein is Large ribosomal subunit protein bL9.